A 579-amino-acid chain; its full sequence is ATP-dependent RNA helicase SUV3, mitochondrial (579 aa).

Residues methionine 1 to aspartate 59 constitute a mitochondrion transit peptide. Residues asparagine 72–valine 213 enclose the Helicase ATP-binding domain. Residue glycine 85–threonine 92 coordinates ATP. One can recognise a Helicase C-terminal domain in the interval valine 214–serine 388. Asparagine 309 is a glycosylation site (N-linked (GlcNAc...) asparagine).

It belongs to the helicase family. As to quaternary structure, homodimer; in free form. Component of the mitochondrial degradosome (mtEXO) complex which is a heteropentamer containing 2 copies of SUPV3L1 and 3 copies of PNPT1. Mg(2+) is required as a cofactor. Requires Mn(2+) as cofactor.

The protein localises to the nucleus. It is found in the mitochondrion matrix. Its subcellular location is the mitochondrion nucleoid. The catalysed reaction is ATP + H2O = ADP + phosphate + H(+). Major helicase player in mitochondrial RNA metabolism. Component of the mitochondrial degradosome (mtEXO) complex, that degrades 3' overhang double-stranded RNA with a 3'-to-5' directionality in an ATP-dependent manner. ATPase and ATP-dependent multisubstrate helicase, able to unwind double-stranded (ds) DNA and RNA, and RNA/DNA heteroduplexes in the 5'-to-3' direction. Plays a role in the RNA surveillance system in mitochondria; regulates the stability of mature mRNAs, the removal of aberrantly formed mRNAs and the rapid degradation of non coding processing intermediates. Confers salinity and drought stress tolerances by maintaining both photosynthesis and antioxidant machinery, probably via an increase in plant hormones levels such as gibberellic acid (GA(3)), the cytokinin zeatin (Z) and indole-3-acetic acid (IAA). The sequence is that of ATP-dependent RNA helicase SUV3, mitochondrial from Oryza sativa subsp. japonica (Rice).